The sequence spans 599 residues: NADH-quinone oxidoreductase subunit C/D (599 aa).

The NADH dehydrogenase I subunit C stretch occupies residues 1–189 (MTDLTTHDLA…DPFELTKQKE (189 aa)). The NADH dehydrogenase I subunit D stretch occupies residues 213–599 (DFMFLNLGPN…IDFVMSDVDR (387 aa)).

This sequence in the N-terminal section; belongs to the complex I 30 kDa subunit family. The protein in the C-terminal section; belongs to the complex I 49 kDa subunit family. As to quaternary structure, NDH-1 is composed of 13 different subunits. Subunits NuoB, CD, E, F, and G constitute the peripheral sector of the complex.

It is found in the cell inner membrane. The catalysed reaction is a quinone + NADH + 5 H(+)(in) = a quinol + NAD(+) + 4 H(+)(out). Its function is as follows. NDH-1 shuttles electrons from NADH, via FMN and iron-sulfur (Fe-S) centers, to quinones in the respiratory chain. The immediate electron acceptor for the enzyme in this species is believed to be ubiquinone. Couples the redox reaction to proton translocation (for every two electrons transferred, four hydrogen ions are translocated across the cytoplasmic membrane), and thus conserves the redox energy in a proton gradient. The protein is NADH-quinone oxidoreductase subunit C/D of Pectobacterium atrosepticum (strain SCRI 1043 / ATCC BAA-672) (Erwinia carotovora subsp. atroseptica).